We begin with the raw amino-acid sequence, 123 residues long: Large ribosomal subunit protein bL12 (123 aa).

Belongs to the bacterial ribosomal protein bL12 family. In terms of assembly, homodimer. Part of the ribosomal stalk of the 50S ribosomal subunit. Forms a multimeric L10(L12)X complex, where L10 forms an elongated spine to which 2 to 4 L12 dimers bind in a sequential fashion. Binds GTP-bound translation factors.

Functionally, forms part of the ribosomal stalk which helps the ribosome interact with GTP-bound translation factors. Is thus essential for accurate translation. This is Large ribosomal subunit protein bL12 from Aliarcobacter butzleri (strain RM4018) (Arcobacter butzleri).